We begin with the raw amino-acid sequence, 650 residues long: Acetyl-coenzyme A synthetase (650 aa).

Residues 191–194 (RGGR), threonine 311, and asparagine 335 each bind CoA. Residues 387-389 (GEP), 411-416 (DTWWQT), aspartate 500, and arginine 515 each bind ATP. Residue serine 523 participates in CoA binding. Arginine 526 is a binding site for ATP. Mg(2+) is bound by residues valine 537, histidine 539, and valine 542. Position 584 (arginine 584) interacts with CoA. Lysine 609 carries the post-translational modification N6-acetyllysine.

It belongs to the ATP-dependent AMP-binding enzyme family. The cofactor is Mg(2+). Acetylated. Deacetylation by the SIR2-homolog deacetylase activates the enzyme.

It carries out the reaction acetate + ATP + CoA = acetyl-CoA + AMP + diphosphate. Functionally, catalyzes the conversion of acetate into acetyl-CoA (AcCoA), an essential intermediate at the junction of anabolic and catabolic pathways. AcsA undergoes a two-step reaction. In the first half reaction, AcsA combines acetate with ATP to form acetyl-adenylate (AcAMP) intermediate. In the second half reaction, it can then transfer the acetyl group from AcAMP to the sulfhydryl group of CoA, forming the product AcCoA. In Shewanella frigidimarina (strain NCIMB 400), this protein is Acetyl-coenzyme A synthetase.